Here is a 236-residue protein sequence, read N- to C-terminus: Small ribosomal subunit protein uS3 (236 aa).

The region spanning 39 to 107 (IREFLTEELK…DTSLNIVEVR (69 aa)) is the KH type-2 domain. A disordered region spans residues 214–236 (ASERRAVEGDNQGSSSNRRRENA).

This sequence belongs to the universal ribosomal protein uS3 family. As to quaternary structure, part of the 30S ribosomal subunit. Forms a tight complex with proteins S10 and S14.

Its function is as follows. Binds the lower part of the 30S subunit head. Binds mRNA in the 70S ribosome, positioning it for translation. This Brucella suis (strain ATCC 23445 / NCTC 10510) protein is Small ribosomal subunit protein uS3.